A 407-amino-acid polypeptide reads, in one-letter code: RNA-binding motif, single-stranded-interacting protein 2 (407 aa).

M1 carries the N-acetylmethionine modification. Residues 14 to 51 form a disordered region; that stretch reads FGYNKNNKKPYVSLSQQMAPPSPSSSTPNSSSGSTAHD. The span at 37–47 shows a compositional bias: low complexity; it reads SSSTPNSSSGS. RRM domains follow at residues 56–129 and 135–220; these read TNLY…MAKQ and TNLY…FADG. S106 is subject to Phosphoserine. 2 positions are modified to phosphoserine: S280 and S285. Residues 374–392 show a composition bias toward low complexity; the sequence is PSSSVSVEESGSQQSQVPV. Residues 374 to 398 are disordered; sequence PSSSVSVEESGSQQSQVPVDAPSEH.

The protein resides in the nucleus. This chain is RNA-binding motif, single-stranded-interacting protein 2 (RBMS2), found in Bos taurus (Bovine).